A 104-amino-acid polypeptide reads, in one-letter code: DNA-directed RNA polymerase subunit omega (104 aa).

Residues 76-104 (IEEEKRRKEEEEKKIKEQIAKEKEDGEKI) form a disordered region.

This sequence belongs to the RNA polymerase subunit omega family. The RNAP catalytic core consists of 2 alpha, 1 beta, 1 beta' and 1 omega subunit. When a sigma factor is associated with the core the holoenzyme is formed, which can initiate transcription.

The catalysed reaction is RNA(n) + a ribonucleoside 5'-triphosphate = RNA(n+1) + diphosphate. Promotes RNA polymerase assembly. Latches the N- and C-terminal regions of the beta' subunit thereby facilitating its interaction with the beta and alpha subunits. The sequence is that of DNA-directed RNA polymerase subunit omega from Streptococcus pneumoniae (strain CGSP14).